A 643-amino-acid polypeptide reads, in one-letter code: Phosphomethylpyrimidine synthase (643 aa).

Substrate is bound by residues N248, M277, Y306, H342, 362–364, 403–406, and E442; these read SRG and DGLR. Residue H446 participates in Zn(2+) binding. Y469 is a substrate binding site. Residue H510 participates in Zn(2+) binding. Residues C590, C593, and C598 each contribute to the [4Fe-4S] cluster site.

Belongs to the ThiC family. In terms of assembly, homodimer. The cofactor is [4Fe-4S] cluster.

It carries out the reaction 5-amino-1-(5-phospho-beta-D-ribosyl)imidazole + S-adenosyl-L-methionine = 4-amino-2-methyl-5-(phosphooxymethyl)pyrimidine + CO + 5'-deoxyadenosine + formate + L-methionine + 3 H(+). Its pathway is cofactor biosynthesis; thiamine diphosphate biosynthesis. Functionally, catalyzes the synthesis of the hydroxymethylpyrimidine phosphate (HMP-P) moiety of thiamine from aminoimidazole ribotide (AIR) in a radical S-adenosyl-L-methionine (SAM)-dependent reaction. The protein is Phosphomethylpyrimidine synthase of Burkholderia cenocepacia (strain HI2424).